The sequence spans 155 residues: Protein-export protein SecB (155 aa).

This sequence belongs to the SecB family. In terms of assembly, homotetramer, a dimer of dimers. One homotetramer interacts with 1 SecA dimer.

It localises to the cytoplasm. One of the proteins required for the normal export of preproteins out of the cell cytoplasm. It is a molecular chaperone that binds to a subset of precursor proteins, maintaining them in a translocation-competent state. It also specifically binds to its receptor SecA. The chain is Protein-export protein SecB from Shigella sonnei (strain Ss046).